A 182-amino-acid polypeptide reads, in one-letter code: Guanylate kinase (182 aa).

In terms of domain architecture, Guanylate kinase-like spans 2–180 (GTLTVITGPS…ALLKLEGLMG (179 aa)). ATP is bound at residue 9–16 (GPSGVGKG).

This sequence belongs to the guanylate kinase family.

Its subcellular location is the cytoplasm. It carries out the reaction GMP + ATP = GDP + ADP. It catalyses the reaction dZMP + ATP = dZDP + ADP. The protein operates within purine metabolism. Functionally, essential for recycling GMP and indirectly, cGMP. (Microbial infection) Catalyzes the phosphorylation of dZMP to dZDP, when the bacterium is infected by a phage that produces the substrate for the synthesis of dZTP (2- amino-2'-deoxyadenosine 5'-triphosphate), which is then used by the phage as a DNA polymerase substrate. This is Guanylate kinase from Parasynechococcus marenigrum (strain WH8102).